The chain runs to 1079 residues: DNA ligase 4 (1079 aa).

Residues 1–20 (MAVHAPYNHAPPPTQEINGQ) form a disordered region. 10 residues coordinate ATP: E295, K297, L298, R302, E357, F395, E460, K465, K482, and K484. K297 functions as the N6-AMP-lysine intermediate in the catalytic mechanism. E357 is a Mg(2+) binding site. E460 contacts Mg(2+). The BRCT 1 domain occupies 699–789 (VETSIFSDMT…TALPFLKEFL (91 aa)). Positions 838–847 (DGEDKDEIDV) are enriched in acidic residues. Positions 838 to 942 (DGEDKDEIDV…SDVGVNGDDY (105 aa)) are disordered. Basic and acidic residues-rich tracts occupy residues 848–878 (EESR…KKLQ) and 900–914 (MSLK…ERSR). The 111-residue stretch at 968 to 1078 (DEDRIFYHLA…TLLDEDLYKP (111 aa)) folds into the BRCT 2 domain.

Belongs to the ATP-dependent DNA ligase family. Mg(2+) is required as a cofactor.

It is found in the nucleus. It catalyses the reaction ATP + (deoxyribonucleotide)n-3'-hydroxyl + 5'-phospho-(deoxyribonucleotide)m = (deoxyribonucleotide)n+m + AMP + diphosphate.. In terms of biological role, DNA ligase involved in DNA non-homologous end joining (NHEJ); required for double-strand break (DSB) repair. In Cryptococcus neoformans var. neoformans serotype D (strain JEC21 / ATCC MYA-565) (Filobasidiella neoformans), this protein is DNA ligase 4 (LIG4).